The primary structure comprises 345 residues: Sorting nexin-15 (345 aa).

Positions 1-130 constitute a PX domain; the sequence is MSRQAKDDFL…EFFRGGEVTR (130 aa). Arg-105 is subject to Omega-N-methylarginine. Positions 133–163 are disordered; that stretch reads EVSGDLHILPPPLIPTPPPDEPRVQPHETWL. Over residues 141–151 the composition is skewed to pro residues; the sequence is LPPPLIPTPPP. Phosphoserine occurs at positions 208 and 234. The interval 226 to 274 is disordered; that stretch reads SKEEGAGPSPTHIGELAALEAGSGRPDQEPWEPGGQAEEDDEEGEPAPA. The MIT domain occupies 272–345; it reads APAYLSQATE…AEEILHLHLS (74 aa).

It belongs to the sorting nexin family.

Its function is as follows. May be involved in several stages of intracellular trafficking. Overexpression of SNX15 disrupts the normal trafficking of proteins from the plasma membrane to recycling endosomes or the TGN. The sequence is that of Sorting nexin-15 (SNX15) from Bos taurus (Bovine).